Here is a 444-residue protein sequence, read N- to C-terminus: Glutamyl-tRNA reductase (444 aa).

Residues 49-52 (TCNR), Ser-109, 114-116 (ETQ), and Gln-120 contribute to the substrate site. Cys-50 (nucleophile) is an active-site residue. 189 to 194 (GAGKMG) contributes to the NADP(+) binding site.

Belongs to the glutamyl-tRNA reductase family. As to quaternary structure, homodimer.

The catalysed reaction is (S)-4-amino-5-oxopentanoate + tRNA(Glu) + NADP(+) = L-glutamyl-tRNA(Glu) + NADPH + H(+). The protein operates within porphyrin-containing compound metabolism; protoporphyrin-IX biosynthesis; 5-aminolevulinate from L-glutamyl-tRNA(Glu): step 1/2. In terms of biological role, catalyzes the NADPH-dependent reduction of glutamyl-tRNA(Glu) to glutamate 1-semialdehyde (GSA). This chain is Glutamyl-tRNA reductase, found in Bacillus cereus (strain G9842).